A 343-amino-acid polypeptide reads, in one-letter code: Tumor necrosis factor receptor superfamily member wgn (343 aa).

2 disordered regions span residues 1–44 (MMPP…IGGS) and 74–96 (SSAA…SIAS). Positions 1–76 (MMPPRLPGGH…ATSASSSSSA (76 aa)) are cleaved as a signal peptide. Residues 13–24 (AMRSRSSSSGHH) show a composition bias toward low complexity. Positions 29–39 (FHKRRRRRQQH) are enriched in basic residues. Residues 77–201 (ANTDIAPPDP…AAWVLDWQTG (125 aa)) are Extracellular-facing. Residues 99-137 (PCAPQHWWDSQRDRCTPCTRCQGEMIPLRPCQLHTDTIC) form a TNFR-Cys repeat. 3 cysteine pairs are disulfide-bonded: Cys-100–Cys-113, Cys-116–Cys-129, and Cys-119–Cys-137. Residues 202–222 (VLYVAVLTCLVFFSVAACILI) traverse the membrane as a helical segment. Residues 223 to 343 (HHMRQWRRME…GVRGCSGLKG (121 aa)) are Cytoplasmic-facing. Positions 225–257 (MRQWRRMERRLDQDVEELSTKLMAKLAEVQSLD) form a coiled coil.

In terms of assembly, monomer. Interacts (via extracellular cystein-rich domain) with egr (via secreted TNF-homology soluble form); forms heterohexamers when 3 copies associate with egr trimers. Interacts with Traf6. Interacts with Moe. Expressed in the adult midgut; under normal conditions expressed at higher levels than the other TNF receptor grnd.

The protein resides in the cell membrane. It localises to the cytoplasmic vesicle membrane. In terms of biological role, receptor for egr. Involved in induction of apoptosis by triggering JNK signaling. Mediates the tumor suppressor activity of egr which eliminates oncogenic cells from epithelia, thereby maintaining epithelial integrity. Following UV-induced epidermal damage, binds to egr released from apoptotic epidermal cells and plays a role in development of thermal allodynia, a responsiveness to subthreshold thermal stimuli which are not normally perceived as noxious. Together with Moe, involved in control of axon targeting of R8 and R2-R5 photoreceptors, independent of egr. This Drosophila melanogaster (Fruit fly) protein is Tumor necrosis factor receptor superfamily member wgn.